A 312-amino-acid chain; its full sequence is Methionyl-tRNA formyltransferase (312 aa).

Position 109 to 112 (109 to 112 (SLLP)) interacts with (6S)-5,6,7,8-tetrahydrofolate.

Belongs to the Fmt family.

It catalyses the reaction L-methionyl-tRNA(fMet) + (6R)-10-formyltetrahydrofolate = N-formyl-L-methionyl-tRNA(fMet) + (6S)-5,6,7,8-tetrahydrofolate + H(+). Its function is as follows. Attaches a formyl group to the free amino group of methionyl-tRNA(fMet). The formyl group appears to play a dual role in the initiator identity of N-formylmethionyl-tRNA by promoting its recognition by IF2 and preventing the misappropriation of this tRNA by the elongation apparatus. The polypeptide is Methionyl-tRNA formyltransferase (Listeria welshimeri serovar 6b (strain ATCC 35897 / DSM 20650 / CCUG 15529 / CIP 8149 / NCTC 11857 / SLCC 5334 / V8)).